A 206-amino-acid polypeptide reads, in one-letter code: Probable GTP-binding protein EngB (206 aa).

The region spanning 25-198 (SRAEVAFAGR…AVRIEGWLAP (174 aa)) is the EngB-type G domain. Mg(2+) is bound by residues Ser40 and Thr62.

The protein belongs to the TRAFAC class TrmE-Era-EngA-EngB-Septin-like GTPase superfamily. EngB GTPase family. Requires Mg(2+) as cofactor.

Functionally, necessary for normal cell division and for the maintenance of normal septation. The protein is Probable GTP-binding protein EngB of Thiobacillus denitrificans (strain ATCC 25259 / T1).